A 400-amino-acid chain; its full sequence is Inosine-5'-monophosphate dehydrogenase (400 aa).

A compositionally biased stretch (basic and acidic residues) spans 96–116 (KNESTPDQNLDKESTDGKDTK). The tract at residues 96–125 (KNESTPDQNLDKESTDGKDTKSNNNIDAYS) is disordered. Residues Asp-163 and 212–214 (GIG) each bind NAD(+). Residues Gly-214 and Gly-216 each coordinate K(+). An IMP-binding site is contributed by Ser-217. Cys-219 is a K(+) binding site. The active-site Thioimidate intermediate is the Cys-219. Residues 252-254 (DGG), 275-276 (GS), and 299-303 (YRGMG) each bind IMP. Residue Arg-315 is the Proton acceptor of the active site. Glu-329 provides a ligand contact to IMP. Positions 383, 384, and 385 each coordinate K(+).

The protein belongs to the IMPDH/GMPR family. Homotetramer. K(+) serves as cofactor.

It is found in the cytoplasm. The catalysed reaction is IMP + NAD(+) + H2O = XMP + NADH + H(+). The protein operates within purine metabolism; XMP biosynthesis via de novo pathway; XMP from IMP: step 1/1. Mycophenolic acid (MPA) is a non-competitive inhibitor that prevents formation of the closed enzyme conformation by binding to the same site as the amobile flap. In contrast, mizoribine monophosphate (MZP) is a competitive inhibitor that induces the closed conformation. MPA is a potent inhibitor of mammalian IMPDHs but a poor inhibitor of the bacterial enzymes. MZP is a more potent inhibitor of bacterial IMPDH. Resistant to mycophenolic acid (MPA) inhibition. Catalyzes the conversion of inosine 5'-phosphate (IMP) to xanthosine 5'-phosphate (XMP), the first committed and rate-limiting step in the de novo synthesis of guanine nucleotides, and therefore plays an important role in the regulation of cell growth. The polypeptide is Inosine-5'-monophosphate dehydrogenase (Cryptosporidium parvum).